A 348-amino-acid polypeptide reads, in one-letter code: Anthranilate phosphoribosyltransferase (348 aa).

Residues G87, 90–91 (GD), T95, 97–100 (NIST), 115–123 (KHGNRSASG), and S127 each bind 5-phospho-alpha-D-ribose 1-diphosphate. G87 is a binding site for anthranilate. Mg(2+) is bound at residue S99. Residue N118 participates in anthranilate binding. R173 provides a ligand contact to anthranilate. The Mg(2+) site is built by D232 and E233.

This sequence belongs to the anthranilate phosphoribosyltransferase family. In terms of assembly, homodimer. Requires Mg(2+) as cofactor.

The enzyme catalyses N-(5-phospho-beta-D-ribosyl)anthranilate + diphosphate = 5-phospho-alpha-D-ribose 1-diphosphate + anthranilate. The protein operates within amino-acid biosynthesis; L-tryptophan biosynthesis; L-tryptophan from chorismate: step 2/5. In terms of biological role, catalyzes the transfer of the phosphoribosyl group of 5-phosphorylribose-1-pyrophosphate (PRPP) to anthranilate to yield N-(5'-phosphoribosyl)-anthranilate (PRA). This is Anthranilate phosphoribosyltransferase from Synechococcus sp. (strain CC9311).